The sequence spans 798 residues: Protocadherin beta-2 (798 aa).

Positions 1 to 30 (MEAGEGKERVPKQRQVLIFFVLLGIAQASC) are cleaved as a signal peptide. Topologically, residues 31–692 (QPRHYSVAEE…AQADLLTVYL (662 aa)) are extracellular. Cadherin domains are found at residues 37-135 (VAEE…SPVF), 136-244 (LDKE…VPEF), 249-349 (YEVQ…PPEL), 354-453 (LINQ…APAF), and 458-563 (YTLF…SPFV). N-linked (GlcNAc...) asparagine glycosylation occurs at N171. K299 carries the N6-acetyllysine modification. Residues N420 and N438 are each glycosylated (N-linked (GlcNAc...) asparagine). N-linked (GlcNAc...) asparagine glycosylation is present at N569. A Cadherin 6 domain is found at 570–673 (GSAPCTELVP…LVDGFSQPYL (104 aa)). The chain crosses the membrane as a helical span at residues 693–713 (VVALASVSSLFLFSVLLFVAV). At 714 to 798 (RLCRRSRAAS…PSFRKSFEFT (85 aa)) the chain is on the cytoplasmic side.

It localises to the cell membrane. Potential calcium-dependent cell-adhesion protein. May be involved in the establishment and maintenance of specific neuronal connections in the brain. This is Protocadherin beta-2 (PCDHB2) from Homo sapiens (Human).